The chain runs to 407 residues: Aurora kinase A-A (407 aa).

Basic and acidic residues predominate over residues 1-10 (MERAVKENHK). The disordered stretch occupies residues 1–130 (MERAVKENHK…KTSAVPKEEG (130 aa)). Composition is skewed to polar residues over residues 67–77 (ILSSQKPTTQI) and 84–110 (QGHQ…STPN). A Protein kinase domain is found at 140-390 (FEIGRPLGKG…LKGVLEHPWI (251 aa)). ATP-binding positions include lysine 150, lysine 169, and 217 to 220 (LDYA). Aspartate 263 (proton acceptor) is an active-site residue. ATP is bound at residue aspartate 281. Residues 287-300 (HAPSSRRTTLCGTL) are activation segment.

It belongs to the protein kinase superfamily. Ser/Thr protein kinase family. Aurora subfamily. In terms of assembly, interacts with kif2c and kif11. Phosphorylated. Autophosphorylated on a serine residue. Highly expressed in ovary and testis.

It is found in the cytoplasm. The protein localises to the cytoskeleton. It localises to the spindle. The protein resides in the microtubule organizing center. Its subcellular location is the centrosome. It catalyses the reaction L-seryl-[protein] + ATP = O-phospho-L-seryl-[protein] + ADP + H(+). It carries out the reaction L-threonyl-[protein] + ATP = O-phospho-L-threonyl-[protein] + ADP + H(+). Mitotic serine/threonine kinases that contributes to the regulation of cell cycle progression. Associates with the centrosome and the spindle microtubules during mitosis and plays a critical role in various mitotic events including the establishment of mitotic spindle, centrosome duplication, centrosome separation as well as maturation, chromosomal alignment, spindle assembly checkpoint, and cytokinesis. Phosphorylates numerous target proteins. Important for microtubule formation and/or stabilization. The protein is Aurora kinase A-A (aurka-a) of Xenopus laevis (African clawed frog).